A 386-amino-acid chain; its full sequence is Cytochrome b (386 aa).

A run of 4 helical transmembrane segments spans residues 32–52, 76–98, 113–133, and 179–199; these read TGSL…FTAM, YLIR…GHIG, VWVI…TGYC, and FFAL…MHLM. Heme b is bound by residues H82 and H96. Heme b-binding residues include H183 and H197. Residue H202 coordinates a ubiquinone. Helical transmembrane passes span 225 to 245, 289 to 309, 321 to 341, and 348 to 368; these read FVFK…TFVF, LGGV…PVTD, FSKT…QLGQ, and FIEM…VLVP.

It belongs to the cytochrome b family. In terms of assembly, fungal cytochrome b-c1 complex contains 10 subunits; 3 respiratory subunits, 2 core proteins and 5 low-molecular weight proteins. Cytochrome b-c1 complex is a homodimer. Heme b is required as a cofactor.

Its subcellular location is the mitochondrion inner membrane. Component of the ubiquinol-cytochrome c reductase complex (complex III or cytochrome b-c1 complex) that is part of the mitochondrial respiratory chain. The b-c1 complex mediates electron transfer from ubiquinol to cytochrome c. Contributes to the generation of a proton gradient across the mitochondrial membrane that is then used for ATP synthesis. The polypeptide is Cytochrome b (COB) (Wickerhamomyces pijperi (Yeast)).